The primary structure comprises 338 residues: Ketol-acid reductoisomerase (NADP(+)) (338 aa).

In terms of domain architecture, KARI N-terminal Rossmann spans 1–181 (MKVYYDKDCD…GGGRTGIIET (181 aa)). NADP(+) is bound by residues 24–27 (YGSQ), arginine 47, serine 50, serine 52, and 82–85 (DEFQ). The active site involves histidine 107. Residue glycine 133 coordinates NADP(+). The KARI C-terminal knotted domain occupies 182–327 (TFKDETETDL…EKLRTMMPWI (146 aa)). Mg(2+)-binding residues include aspartate 190, glutamate 194, glutamate 226, and glutamate 230. A substrate-binding site is contributed by serine 251.

This sequence belongs to the ketol-acid reductoisomerase family. Requires Mg(2+) as cofactor.

The enzyme catalyses (2R)-2,3-dihydroxy-3-methylbutanoate + NADP(+) = (2S)-2-acetolactate + NADPH + H(+). It catalyses the reaction (2R,3R)-2,3-dihydroxy-3-methylpentanoate + NADP(+) = (S)-2-ethyl-2-hydroxy-3-oxobutanoate + NADPH + H(+). The protein operates within amino-acid biosynthesis; L-isoleucine biosynthesis; L-isoleucine from 2-oxobutanoate: step 2/4. It functions in the pathway amino-acid biosynthesis; L-valine biosynthesis; L-valine from pyruvate: step 2/4. Functionally, involved in the biosynthesis of branched-chain amino acids (BCAA). Catalyzes an alkyl-migration followed by a ketol-acid reduction of (S)-2-acetolactate (S2AL) to yield (R)-2,3-dihydroxy-isovalerate. In the isomerase reaction, S2AL is rearranged via a Mg-dependent methyl migration to produce 3-hydroxy-3-methyl-2-ketobutyrate (HMKB). In the reductase reaction, this 2-ketoacid undergoes a metal-dependent reduction by NADPH to yield (R)-2,3-dihydroxy-isovalerate. The sequence is that of Ketol-acid reductoisomerase (NADP(+)) from Azotobacter vinelandii (strain DJ / ATCC BAA-1303).